Reading from the N-terminus, the 97-residue chain is Aspartyl/glutamyl-tRNA(Asn/Gln) amidotransferase subunit C (97 aa).

It belongs to the GatC family. Heterotrimer of A, B and C subunits.

The enzyme catalyses L-glutamyl-tRNA(Gln) + L-glutamine + ATP + H2O = L-glutaminyl-tRNA(Gln) + L-glutamate + ADP + phosphate + H(+). It carries out the reaction L-aspartyl-tRNA(Asn) + L-glutamine + ATP + H2O = L-asparaginyl-tRNA(Asn) + L-glutamate + ADP + phosphate + 2 H(+). Its function is as follows. Allows the formation of correctly charged Asn-tRNA(Asn) or Gln-tRNA(Gln) through the transamidation of misacylated Asp-tRNA(Asn) or Glu-tRNA(Gln) in organisms which lack either or both of asparaginyl-tRNA or glutaminyl-tRNA synthetases. The reaction takes place in the presence of glutamine and ATP through an activated phospho-Asp-tRNA(Asn) or phospho-Glu-tRNA(Gln). In Sulfolobus acidocaldarius (strain ATCC 33909 / DSM 639 / JCM 8929 / NBRC 15157 / NCIMB 11770), this protein is Aspartyl/glutamyl-tRNA(Asn/Gln) amidotransferase subunit C.